We begin with the raw amino-acid sequence, 348 residues long: Heat-inducible transcription repressor HrcA (348 aa).

This sequence belongs to the HrcA family.

In terms of biological role, negative regulator of class I heat shock genes (grpE-dnaK-dnaJ and groELS operons). Prevents heat-shock induction of these operons. This Syntrophobacter fumaroxidans (strain DSM 10017 / MPOB) protein is Heat-inducible transcription repressor HrcA.